The chain runs to 812 residues: Eukaryotic translation initiation factor 3 subunit C (812 aa).

Residues Met1–Lys110 form a disordered region. Acidic residues-rich tracts occupy residues Ser18–Leu30 and Ser38–Asp64. Residues Ser98, Ser99, and Ser103 each carry the phosphoserine modification. In terms of domain architecture, PCI spans Tyr608–Glu783.

Belongs to the eIF-3 subunit C family. As to quaternary structure, the eukaryotic translation initiation factor 3 (eIF-3) core complex is composed of TIF32, PRT1, NIP1, TIF34 and TIF35. A subcomplex of TIF32, NIP1 and PRT1 mediates the interaction with eIF-1, TIF5/eIF-5 and HCR1. The factors eIF-1, eIF-2, eIF-3, TIF5/eIF-5 and methionyl-tRNAi form a multifactor complex (MFC) that may bind to the 40S ribosome. TIF32, NIP1 and TIF5/eIF-5 comprise a minimal 40S-ribosome-binding unit. NIP1 interacts with TIF5/eIF-5 and SUI1.

It is found in the cytoplasm. Functionally, component of the eukaryotic translation initiation factor 3 (eIF-3) complex, which is involved in protein synthesis of a specialized repertoire of mRNAs and, together with other initiation factors, stimulates binding of mRNA and methionyl-tRNAi to the 40S ribosome. The eIF-3 complex specifically targets and initiates translation of a subset of mRNAs involved in cell proliferation. In Saccharomyces cerevisiae (strain ATCC 204508 / S288c) (Baker's yeast), this protein is Eukaryotic translation initiation factor 3 subunit C.